The primary structure comprises 569 residues: Glycylpeptide N-tetradecanoyltransferase (569 aa).

The span at 1-18 (MPPTEESKPVDPAQEKQA) shows a compositional bias: basic and acidic residues. The tract at residues 1-82 (MPPTEESKPV…STESSAEVGL (82 aa)) is disordered. Residues 55–68 (TKKKNKKKSKKKNK) show a composition bias toward basic residues. Tetradecanoyl-CoA-binding positions include 158 to 161 (YKFW), 291 to 293 (LCI), and 299 to 303 (GKRLA). Val-569 acts as the Proton acceptor; via carboxylate in catalysis.

Belongs to the NMT family. In terms of assembly, monomer.

The protein localises to the cytoplasm. It catalyses the reaction N-terminal glycyl-[protein] + tetradecanoyl-CoA = N-tetradecanoylglycyl-[protein] + CoA + H(+). Functionally, adds a myristoyl group to the N-terminal glycine residue of certain cellular proteins. This Neurospora crassa (strain ATCC 24698 / 74-OR23-1A / CBS 708.71 / DSM 1257 / FGSC 987) protein is Glycylpeptide N-tetradecanoyltransferase (gtt-1).